The following is a 193-amino-acid chain: Ion-translocating oxidoreductase complex subunit A (193 aa).

Helical transmembrane passes span 5–25, 47–67, 72–92, 102–122, 134–154, and 167–187; these read ILFF…FLGL, FVIL…LLPL, LRII…EIVL, LLGI…IPLF, IFYG…FSCI, and FQGA…FMGF.

This sequence belongs to the NqrDE/RnfAE family. As to quaternary structure, the complex is composed of six subunits: RnfA, RnfB, RnfC, RnfD, RnfE and RnfG.

It localises to the cell inner membrane. In terms of biological role, part of a membrane-bound complex that couples electron transfer with translocation of ions across the membrane. The protein is Ion-translocating oxidoreductase complex subunit A of Buchnera aphidicola subsp. Acyrthosiphon pisum (strain APS) (Acyrthosiphon pisum symbiotic bacterium).